A 471-amino-acid chain; its full sequence is Probable flavin-containing monoamine oxidase B (471 aa).

Cys-406 is modified (S-8alpha-FAD cysteine).

Belongs to the flavin monoamine oxidase family. It depends on FAD as a cofactor.

The enzyme catalyses a secondary aliphatic amine + O2 + H2O = a primary amine + an aldehyde + H2O2. This Dictyostelium discoideum (Social amoeba) protein is Probable flavin-containing monoamine oxidase B (maoB-1).